The chain runs to 514 residues: Periplasmic [NiFeSe] hydrogenase large subunit (514 aa).

Glutamate 52 contributes to the Fe cation binding site. Residues cysteine 71 and cysteine 74 each contribute to the Ni(2+) site. Fe cation-binding residues include cysteine 74 and isoleucine 445. Ni(2+) contacts are provided by selenocysteine 493 and cysteine 496. A non-standard amino acid (selenocysteine) is located at residue selenocysteine 493. Residues cysteine 496 and histidine 499 each contribute to the Fe cation site.

The protein belongs to the [NiFe]/[NiFeSe] hydrogenase large subunit family. In terms of assembly, heterodimer of a large and a small subunit. Fe cation serves as cofactor. The cofactor is Ni(2+).

It localises to the periplasm. It catalyses the reaction H2 + A = AH2. The chain is Periplasmic [NiFeSe] hydrogenase large subunit from Desulfomicrobium baculatum (Desulfovibrio baculatus).